Reading from the N-terminus, the 443-residue chain is Xaa-Pro dipeptidase (443 aa).

Residues D246, D257, H339, E384, and E423 each coordinate Mn(2+).

This sequence belongs to the peptidase M24B family. Bacterial-type prolidase subfamily. Requires Mn(2+) as cofactor.

The catalysed reaction is Xaa-L-Pro dipeptide + H2O = an L-alpha-amino acid + L-proline. Splits dipeptides with a prolyl residue in the C-terminal position. The protein is Xaa-Pro dipeptidase of Escherichia coli (strain SMS-3-5 / SECEC).